We begin with the raw amino-acid sequence, 299 residues long: Virginiamycin B lyase (299 aa).

His-229 is a binding site for substrate. Position 269 (Glu-269) interacts with Mg(2+). His-271 (proton acceptor) is an active-site residue. Position 286 (Glu-286) interacts with Mg(2+).

Belongs to the Vgb family. In terms of assembly, monomer. The cofactor is Mg(2+).

In terms of biological role, inactivates the type B streptogramin antibiotics by linearizing the lactone ring at the ester linkage, generating a free phenylglycine carboxylate and converting the threonyl moiety into 2-amino-butenoic acid. The sequence is that of Virginiamycin B lyase from Bordetella bronchiseptica (strain ATCC BAA-588 / NCTC 13252 / RB50) (Alcaligenes bronchisepticus).